The following is a 409-amino-acid chain: Serine/threonine transporter SstT (409 aa).

The next 9 membrane-spanning stretches (helical) occupy residues 24–44 (LALGIVIGSVSPQLGLAAGLF), 48–68 (FVGALKAVAPVLVFILVAATI), 82–102 (IIVLYLIGTFSAALTAVIAGM), 142–162 (AIANANYIGILAWALVLGAAL), 194–214 (LGIFGLVSSTIAETGFGALAG), 218–238 (LLAVLLGCMAFIALVVNPAIV), 292–312 (IPLGATVNMGGAAITITVLAM), 319–339 (GIQVDFATALLLSLVATVSAC), and 365–385 (VAMQVVAVGFIIGVIQDSAET).

The protein belongs to the dicarboxylate/amino acid:cation symporter (DAACS) (TC 2.A.23) family.

Its subcellular location is the cell inner membrane. It carries out the reaction L-serine(in) + Na(+)(in) = L-serine(out) + Na(+)(out). The enzyme catalyses L-threonine(in) + Na(+)(in) = L-threonine(out) + Na(+)(out). In terms of biological role, involved in the import of serine and threonine into the cell, with the concomitant import of sodium (symport system). This chain is Serine/threonine transporter SstT, found in Neisseria meningitidis serogroup C / serotype 2a (strain ATCC 700532 / DSM 15464 / FAM18).